We begin with the raw amino-acid sequence, 441 residues long: NADH-quinone oxidoreductase subunit D 1 (441 aa).

The protein belongs to the complex I 49 kDa subunit family. In terms of assembly, NDH-1 is composed of 14 different subunits. Subunits NuoB, C, D, E, F, and G constitute the peripheral sector of the complex.

It is found in the cell membrane. The catalysed reaction is a quinone + NADH + 5 H(+)(in) = a quinol + NAD(+) + 4 H(+)(out). In terms of biological role, NDH-1 shuttles electrons from NADH, via FMN and iron-sulfur (Fe-S) centers, to quinones in the respiratory chain. The immediate electron acceptor for the enzyme in this species is believed to be a menaquinone. Couples the redox reaction to proton translocation (for every two electrons transferred, four hydrogen ions are translocated across the cytoplasmic membrane), and thus conserves the redox energy in a proton gradient. The polypeptide is NADH-quinone oxidoreductase subunit D 1 (Salinispora tropica (strain ATCC BAA-916 / DSM 44818 / JCM 13857 / NBRC 105044 / CNB-440)).